A 385-amino-acid chain; its full sequence is Probable splicing factor YJU2B (385 aa).

Residues 1-26 are disordered; sequence MGERKGQNKYYPPDFNPEKHGSLNRY. Serine 40 carries the post-translational modification Phosphoserine. Residues 182–214 are a coiled coil; the sequence is LNSMLRRHFREKKKAMQEEEEKDQALQAKASLA. The tract at residues 257–385 is disordered; that stretch reads PSAQGPSASS…VADYSDSESE (129 aa). Residues 258–271 show a composition bias toward low complexity; it reads SAQGPSASSSKASS. At serine 306 the chain carries Phosphoserine. Positions 359–373 are enriched in polar residues; it reads GSSQEDLLNPNTPNA.

This sequence belongs to the CWC16 family.

It is found in the nucleus. Its function is as follows. May be involved in mRNA splicing. This chain is Probable splicing factor YJU2B (Yju2b), found in Mus musculus (Mouse).